A 185-amino-acid polypeptide reads, in one-letter code: MIGDWRVQQVARVVRAGGVIAYPTEAVWGVGCDPWDEDAVLRLLALKERPVEKGLILIADTVEQFDFLLDDLPERWLDRLSGTWPGPNTWLVPHRGRLPEWITGRHDSVALRVTDHPLVKRLCALTGPLVSTSANPAGRPAARSRLRVEQYFPQQLDAVFNGALGGRRNPSVIRDLRSGEVIRPA.

The YrdC-like domain maps to 4-185; that stretch reads DWRVQQVARV…LRSGEVIRPA (182 aa).

The protein belongs to the SUA5 family. TsaC subfamily.

It is found in the cytoplasm. The catalysed reaction is L-threonine + hydrogencarbonate + ATP = L-threonylcarbamoyladenylate + diphosphate + H2O. Functionally, required for the formation of a threonylcarbamoyl group on adenosine at position 37 (t(6)A37) in tRNAs that read codons beginning with adenine. Catalyzes the conversion of L-threonine, HCO(3)(-)/CO(2) and ATP to give threonylcarbamoyl-AMP (TC-AMP) as the acyladenylate intermediate, with the release of diphosphate. This chain is Threonylcarbamoyl-AMP synthase, found in Stutzerimonas stutzeri (strain A1501) (Pseudomonas stutzeri).